The following is a 476-amino-acid chain: Glutamyl-tRNA(Gln) amidotransferase subunit A (476 aa).

Active-site charge relay system residues include Lys70 and Ser145. Ser169 (acyl-ester intermediate) is an active-site residue.

This sequence belongs to the amidase family. GatA subfamily. In terms of assembly, heterotrimer of A, B and C subunits.

The catalysed reaction is L-glutamyl-tRNA(Gln) + L-glutamine + ATP + H2O = L-glutaminyl-tRNA(Gln) + L-glutamate + ADP + phosphate + H(+). In terms of biological role, allows the formation of correctly charged Gln-tRNA(Gln) through the transamidation of misacylated Glu-tRNA(Gln) in organisms which lack glutaminyl-tRNA synthetase. The reaction takes place in the presence of glutamine and ATP through an activated gamma-phospho-Glu-tRNA(Gln). In Methanosarcina mazei (strain ATCC BAA-159 / DSM 3647 / Goe1 / Go1 / JCM 11833 / OCM 88) (Methanosarcina frisia), this protein is Glutamyl-tRNA(Gln) amidotransferase subunit A.